The primary structure comprises 241 residues: Small ribosomal subunit protein uS2 (241 aa).

The protein belongs to the universal ribosomal protein uS2 family.

The protein is Small ribosomal subunit protein uS2 of Sodalis glossinidius (strain morsitans).